Reading from the N-terminus, the 266-residue chain is Signal peptidase I (266 aa).

The Cytoplasmic portion of the chain corresponds to 1-20 (MQTDNTKSNTNKTAKQEWGS). The helical transmembrane segment at 21-41 (FAFVICIALLIRILIMEPFTV) threads the bilayer. Topologically, residues 42–266 (PTGSMKATIL…IFRNLYNTDA (225 aa)) are periplasmic. Residues Ser-45 and Lys-108 contribute to the active site.

This sequence belongs to the peptidase S26 family.

The protein resides in the cell inner membrane. The enzyme catalyses Cleavage of hydrophobic, N-terminal signal or leader sequences from secreted and periplasmic proteins.. Complements E.coli mutants temperature-sensitive for LepB function. The chain is Signal peptidase I (lepB) from Rickettsia rickettsii (strain Sheila Smith).